The following is a 312-amino-acid chain: NADH-ubiquinone oxidoreductase chain 1 (312 aa).

The next 8 helical transmembrane spans lie at 3-23, 77-97, 104-124, 150-170, 174-194, 226-246, 250-270, and 289-309; these read FILSLIGSLLLIICVLVSVAF, ISPIFSLFLSLFVWMCMPFFV, LGGLFFLCCTSLGVYTVMVAG, LALILLSFVFLIGSYNMVYFF, IYVWFLIILFPMALVWLTISL, LIFMAEYASILFMSMLFCVIF, DVFNLLFYVKLTFISFIFIWA, and CFLSFSLNYLLFFIGFKILLF.

This sequence belongs to the complex I subunit 1 family.

It localises to the mitochondrion inner membrane. The catalysed reaction is a ubiquinone + NADH + 5 H(+)(in) = a ubiquinol + NAD(+) + 4 H(+)(out). Core subunit of the mitochondrial membrane respiratory chain NADH dehydrogenase (Complex I) that is believed to belong to the minimal assembly required for catalysis. Complex I functions in the transfer of electrons from NADH to the respiratory chain. The immediate electron acceptor for the enzyme is believed to be ubiquinone. This Drosophila subobscura (Fruit fly) protein is NADH-ubiquinone oxidoreductase chain 1 (mt:ND1).